Reading from the N-terminus, the 344-residue chain is Dihydroorotate dehydrogenase (quinone) (344 aa).

FMN-binding positions include 61 to 65 (AGLDK) and Thr85. Residue Lys65 coordinates substrate. Residue 110–114 (NRMGF) participates in substrate binding. FMN is bound by residues Asn138 and Asn171. Asn171 is a binding site for substrate. Ser174 serves as the catalytic Nucleophile. Asn176 is a substrate binding site. FMN contacts are provided by Lys216 and Thr244. 245-246 (NT) contacts substrate. FMN-binding positions include Gly267, Gly296, and 317–318 (YS).

It belongs to the dihydroorotate dehydrogenase family. Type 2 subfamily. In terms of assembly, monomer. The cofactor is FMN.

The protein resides in the cell membrane. It carries out the reaction (S)-dihydroorotate + a quinone = orotate + a quinol. Its pathway is pyrimidine metabolism; UMP biosynthesis via de novo pathway; orotate from (S)-dihydroorotate (quinone route): step 1/1. Functionally, catalyzes the conversion of dihydroorotate to orotate with quinone as electron acceptor. The protein is Dihydroorotate dehydrogenase (quinone) of Psychrobacter sp. (strain PRwf-1).